A 336-amino-acid polypeptide reads, in one-letter code: MQKNLTRWLLTCCIMVVAMIIVGGITRLTDSGLSIVEWRPVTGILPPFSYDTWQAEFAKYKAFPEYNAVNYGMTLSEFKFIYLLEFVHRLLGRATGLIYILPLIYFYFKGIIKNRDILSYIIVLLLFCVQGFMGWYMVKSGLVNHPSVSHFRLAFHLIIAVIIYHLLFYKLVKNCCDILLIPSQINLKLPLIFSVAAIAMIYVQIFLGALVAGLDAGLIYNSFPLMGGNFIPIEIKDNFISFKNWYDPVFVQFMHRLGAYSLSIIVIALIISLLKVKNPKLNKVAFYLSIALLIQLSTGVITLLYHVPIIAASMHQFFAIVLLSVVIWCYSLIKNS.

A run of 5 helical transmembrane segments spans residues L5–I25, G92–I112, I117–M137, L153–K173, and L191–V211. H255 provides a ligand contact to heme. Helical transmembrane passes span L257–K277, V284–L304, and V307–I327. H315 serves as a coordination point for heme.

The protein belongs to the COX15/CtaA family. Type 2 subfamily. Interacts with CtaB. It depends on heme b as a cofactor.

Its subcellular location is the cell membrane. The catalysed reaction is Fe(II)-heme o + 2 A + H2O = Fe(II)-heme a + 2 AH2. It participates in porphyrin-containing compound metabolism; heme A biosynthesis; heme A from heme O: step 1/1. In terms of biological role, catalyzes the conversion of heme O to heme A by two successive hydroxylations of the methyl group at C8. The first hydroxylation forms heme I, the second hydroxylation results in an unstable dihydroxymethyl group, which spontaneously dehydrates, resulting in the formyl group of heme A. This chain is Heme A synthase, found in Rickettsia bellii (strain OSU 85-389).